Here is a 468-residue protein sequence, read N- to C-terminus: Probable multidrug resistance protein NorM (468 aa).

11 consecutive transmembrane segments (helical) span residues 57–79, 100–122, 142–164, 173–195, 205–227, 248–270, 280–302, 323–345, 360–382, 401–423, and 433–452; these read LAAG…GVLT, IYWT…LSFA, YAAV…RSFL, LLWV…IHGA, GSAT…LLHG, LFGI…LATG, SLAA…LAIG, HAGF…VLIV, PANA…FQIV, VPML…WFAF, and WWGL…WRFH.

The protein belongs to the multi antimicrobial extrusion (MATE) (TC 2.A.66.1) family.

It localises to the cell inner membrane. Its function is as follows. Multidrug efflux pump. This Burkholderia mallei (strain ATCC 23344) protein is Probable multidrug resistance protein NorM (norM).